The primary structure comprises 304 residues: ATP synthase gamma chain (304 aa).

Belongs to the ATPase gamma chain family. F-type ATPases have 2 components, CF(1) - the catalytic core - and CF(0) - the membrane proton channel. CF(1) has five subunits: alpha(3), beta(3), gamma(1), delta(1), epsilon(1). CF(0) has three main subunits: a, b and c.

It is found in the cell membrane. In terms of biological role, produces ATP from ADP in the presence of a proton gradient across the membrane. The gamma chain is believed to be important in regulating ATPase activity and the flow of protons through the CF(0) complex. The chain is ATP synthase gamma chain from Mycobacterium marinum (strain ATCC BAA-535 / M).